The following is a 1272-amino-acid chain: Magnesium-chelatase subunit H (1272 aa).

Belongs to the Mg-chelatase subunit H family.

It catalyses the reaction protoporphyrin IX + Mg(2+) + ATP + H2O = Mg-protoporphyrin IX + ADP + phosphate + 3 H(+). The protein operates within porphyrin-containing compound metabolism; bacteriochlorophyll biosynthesis (light-independent). In terms of biological role, involved in bacteriochlorophyll pigment biosynthesis; introduces a magnesium ion into protoporphyrin IX to yield Mg-protoroporphyrin IX. In Chlorobaculum parvum (strain DSM 263 / NCIMB 8327) (Chlorobium vibrioforme subsp. thiosulfatophilum), this protein is Magnesium-chelatase subunit H (bchH).